Reading from the N-terminus, the 82-residue chain is uncharacterized protein (82 aa).

This is an uncharacterized protein from Pigeon circovirus (PiCV).